A 143-amino-acid chain; its full sequence is Large ribosomal subunit protein uL11 (143 aa).

The protein belongs to the universal ribosomal protein uL11 family. As to quaternary structure, part of the ribosomal stalk of the 50S ribosomal subunit. Interacts with L10 and the large rRNA to form the base of the stalk. L10 forms an elongated spine to which L12 dimers bind in a sequential fashion forming a multimeric L10(L12)X complex. In terms of processing, one or more lysine residues are methylated.

Its function is as follows. Forms part of the ribosomal stalk which helps the ribosome interact with GTP-bound translation factors. The sequence is that of Large ribosomal subunit protein uL11 from Rhizobium johnstonii (strain DSM 114642 / LMG 32736 / 3841) (Rhizobium leguminosarum bv. viciae).